A 188-amino-acid chain; its full sequence is Elongation factor P (188 aa).

Lysine 34 bears the N6-(3,6-diaminohexanoyl)-5-hydroxylysine mark.

Belongs to the elongation factor P family. In terms of processing, may be beta-lysylated on the epsilon-amino group of Lys-34 by the combined action of EpmA and EpmB, and then hydroxylated on the C5 position of the same residue by EpmC (if this protein is present). Lysylation is critical for the stimulatory effect of EF-P on peptide-bond formation. The lysylation moiety may extend toward the peptidyltransferase center and stabilize the terminal 3-CCA end of the tRNA. Hydroxylation of the C5 position on Lys-34 may allow additional potential stabilizing hydrogen-bond interactions with the P-tRNA.

Its subcellular location is the cytoplasm. It participates in protein biosynthesis; polypeptide chain elongation. Its function is as follows. Involved in peptide bond synthesis. Alleviates ribosome stalling that occurs when 3 or more consecutive Pro residues or the sequence PPG is present in a protein, possibly by augmenting the peptidyl transferase activity of the ribosome. Modification of Lys-34 is required for alleviation. The chain is Elongation factor P from Xanthomonas oryzae pv. oryzae (strain MAFF 311018).